The primary structure comprises 520 residues: Sterile alpha motif domain-containing protein 3 (520 aa).

The SAM domain occupies 4–71 (WSVDQVCKWL…KYKQGNQELK (68 aa)). Residues 67 to 104 (NQELKPTGGPADTSTLTPAQAAPEHEQNPSPTSHGDQT) form a disordered region. The segment covering 94–104 (NPSPTSHGDQT) has biased composition (polar residues).

This Mus musculus (Mouse) protein is Sterile alpha motif domain-containing protein 3 (Samd3).